The following is a 190-amino-acid chain: Inner membrane-spanning protein YciB (190 aa).

The next 6 membrane-spanning stretches (helical) occupy residues 3-23, 24-44, 49-69, 76-96, 121-141, and 149-169; these read FLFDLFPVILFFAAFKVAGIY, VATTVAMVATVLQIAWVWFKH, AMQWLSLLIIGVFGGATLIFH, WKPTVLYWLFGVVLLGSVVVV, LVWALFFLVMGCLNLYVAYNF, and FKLFGSMGLMVVFILAQSVWL.

The protein belongs to the YciB family.

The protein localises to the cell inner membrane. Plays a role in cell envelope biogenesis, maintenance of cell envelope integrity and membrane homeostasis. The chain is Inner membrane-spanning protein YciB from Ralstonia pickettii (strain 12J).